The primary structure comprises 953 residues: Kinesin-like protein KIF23 (953 aa).

The Nuclear localization signal signature appears at 7–11; that stretch reads KTVRK. In terms of domain architecture, Kinesin motor spans 25–436; that stretch reads PVGVYCRVRP…MRFAEVTQEV (412 aa). 112-119 lines the ATP pocket; sequence GVTGSGKT. S155 and S160 each carry phosphoserine. The stretch at 542–618 forms a coiled coil; the sequence is QEKLNEREKV…RRLEARLQGM (77 aa). Residues K572 and K587 each participate in a glycyl lysine isopeptide (Lys-Gly) (interchain with G-Cter in SUMO2) cross-link. S606 carries the post-translational modification Phosphoserine. Residues K625, K648, K663, and K666 each participate in a glycyl lysine isopeptide (Lys-Gly) (interchain with G-Cter in SUMO2) cross-link. Residues 658-695 form a disordered region; it reads IVTEPKPEKPERPSRERDREKIIPRSVSPSPLPLSSNN. Basic and acidic residues predominate over residues 662–680; sequence PKPEKPERPSRERDREKII. The span at 681–693 shows a compositional bias: low complexity; the sequence is PRSVSPSPLPLSS. Phosphoserine is present on residues S683 and S685. Residue T739 is modified to Phosphothreonine. S807 bears the Phosphoserine mark. Glycyl lysine isopeptide (Lys-Gly) (interchain with G-Cter in SUMO2) cross-links involve residues K816 and K847. Residue S860 is modified to Phosphoserine. Glycyl lysine isopeptide (Lys-Gly) (interchain with G-Cter in SUMO2) cross-links involve residues K867, K870, and K892. 2 disordered regions span residues 894–921 and 934–953; these read ELPTGSRKRRSSTLAPAQPDGTESEWTD and AGSQLGPGYQHHAQPKRKKP. S904 is subject to Phosphoserine. A Phosphothreonine modification is found at T920. K949 participates in a covalent cross-link: Glycyl lysine isopeptide (Lys-Gly) (interchain with G-Cter in SUMO2).

This sequence belongs to the TRAFAC class myosin-kinesin ATPase superfamily. Kinesin family. In terms of assembly, heterotetramer of two molecules each of RACGAP1 and KIF23. Found in the centralspindlin complex. Interacts with RACGAP1; the interaction is direct. Interacts with ECT2 and PRC1. Interacts with ANXA11 during cytokinesis. Interacts with BIRC6/bruce and USP8/UBPY. Interacts with ARF6, forming heterodimers and heterotetramers. Post-translationally, ubiquitinated. Deubiquitinated by USP8/UBPY. As to expression, detected in testis and ovary from newborn mice (at protein level). Detected in brain, spinal cord and small intestine.

Its subcellular location is the nucleus. The protein resides in the cytoplasm. The protein localises to the cytoskeleton. It localises to the spindle. It is found in the midbody. Its subcellular location is the midbody ring. Component of the centralspindlin complex that serves as a microtubule-dependent and Rho-mediated signaling required for the myosin contractile ring formation during the cell cycle cytokinesis. Essential for cytokinesis in Rho-mediated signaling. Required for the localization of ECT2 to the central spindle. Plus-end-directed motor enzyme that moves antiparallel microtubules in vitro. This chain is Kinesin-like protein KIF23 (Kif23), found in Mus musculus (Mouse).